The primary structure comprises 518 residues: 2-isopropylmalate synthase (518 aa).

Residues 5–269 form the Pyruvate carboxyltransferase domain; sequence IIVLDTTLRD…STNVRLKELI (265 aa). The Mn(2+) site is built by D14, H204, H206, and N240. The interval 397–518 is regulatory domain; sequence ELDSFQVVTN…HDSQAPVSAR (122 aa).

Belongs to the alpha-IPM synthase/homocitrate synthase family. LeuA type 1 subfamily. As to quaternary structure, homodimer. It depends on Mn(2+) as a cofactor.

The protein resides in the cytoplasm. It catalyses the reaction 3-methyl-2-oxobutanoate + acetyl-CoA + H2O = (2S)-2-isopropylmalate + CoA + H(+). Its pathway is amino-acid biosynthesis; L-leucine biosynthesis; L-leucine from 3-methyl-2-oxobutanoate: step 1/4. Its function is as follows. Catalyzes the condensation of the acetyl group of acetyl-CoA with 3-methyl-2-oxobutanoate (2-ketoisovalerate) to form 3-carboxy-3-hydroxy-4-methylpentanoate (2-isopropylmalate). This chain is 2-isopropylmalate synthase, found in Geobacillus sp. (strain Y412MC10).